Reading from the N-terminus, the 301-residue chain is UDP-N-acetylenolpyruvoylglucosamine reductase 1 (301 aa).

The region spanning lysine 29–glycine 196 is the FAD-binding PCMH-type domain. Arginine 174 is a catalytic residue. Serine 225 serves as the catalytic Proton donor. Residue glutamate 295 is part of the active site.

Belongs to the MurB family. FAD is required as a cofactor.

Its subcellular location is the cytoplasm. It carries out the reaction UDP-N-acetyl-alpha-D-muramate + NADP(+) = UDP-N-acetyl-3-O-(1-carboxyvinyl)-alpha-D-glucosamine + NADPH + H(+). Its pathway is cell wall biogenesis; peptidoglycan biosynthesis. Functionally, cell wall formation. The sequence is that of UDP-N-acetylenolpyruvoylglucosamine reductase 1 (murB1) from Bacillus cereus (strain ATCC 14579 / DSM 31 / CCUG 7414 / JCM 2152 / NBRC 15305 / NCIMB 9373 / NCTC 2599 / NRRL B-3711).